The chain runs to 378 residues: Putative F-box protein At5g51000 (378 aa).

In terms of domain architecture, F-box spans 1–47 (MSTMSDLFPDLVEEILSRVPITSLKAVKLTCKQWNDLSKDSSFTKNH).

This is Putative F-box protein At5g51000 from Arabidopsis thaliana (Mouse-ear cress).